We begin with the raw amino-acid sequence, 162 residues long: Interleukin-15 (162 aa).

The first 29 residues, 1-29, serve as a signal peptide directing secretion; sequence MRILKPYLRSTSIQCYLCLLLNSHFLTEA. The propeptide occupies 30–48; that stretch reads GIHVFILGCISAGLPKTEA. 2 cysteine pairs are disulfide-bonded: Cys83/Cys133 and Cys90/Cys136. Residues Asn113, Asn121, and Asn127 are each glycosylated (N-linked (GlcNAc...) asparagine).

It belongs to the IL-15/IL-21 family.

The protein localises to the secreted. In terms of biological role, cytokine that plays a major role in the development of inflammatory and protective immune responses to microbial invaders and parasites by modulating immune cells of both the innate and adaptive immune systems. Stimulates the proliferation of natural killer cells, T-cells and B-cells and promotes the secretion of several cytokines. In monocytes, induces the production of IL8 and monocyte chemotactic protein 1/CCL2, two chemokines that attract neutrophils and monocytes respectively to sites of infection. Unlike most cytokines, which are secreted in soluble form, IL15 is expressed in association with its high affinity IL15RA on the surface of IL15-producing cells and delivers signals to target cells that express IL2RB and IL2RG receptor subunits. Binding to its receptor triggers the phosphorylation of JAK1 and JAK3 and the recruitment and subsequent phosphorylation of signal transducer and activator of transcription-3/STAT3 and STAT5. In mast cells, induces the rapid tyrosine phosphorylation of STAT6 and thereby controls mast cell survival and release of cytokines such as IL4. This is Interleukin-15 (IL15) from Ovis aries (Sheep).